The chain runs to 259 residues: GTP-binding protein RHO4 (259 aa).

A GTP-binding site is contributed by 59-66 (GDGATGKT). The Effector region signature appears at 81–89 (YVPTIFENY). Residues 107 to 111 (DTAGQ) and 165 to 168 (LKSD) each bind GTP. At C256 the chain carries Cysteine methyl ester. Residue C256 is the site of S-geranylgeranyl cysteine attachment. Positions 257 to 259 (VVL) are cleaved as a propeptide — removed in mature form.

This sequence belongs to the small GTPase superfamily. Rho family.

It localises to the cell membrane. The sequence is that of GTP-binding protein RHO4 (RHO4) from Eremothecium gossypii (strain ATCC 10895 / CBS 109.51 / FGSC 9923 / NRRL Y-1056) (Yeast).